The chain runs to 246 residues: Exosome complex component SKI6 (246 aa).

Belongs to the RNase PH family. Component of the RNA exosome complex. Specifically part of the catalytically inactive RNA exosome core complex (Exo-9) which may associate with the catalytic subunits RRP6 and DIS3 in cytoplasmic- and nuclear-specific RNA exosome complex forms. Exo-9 is formed by a hexameric base ring of RNase PH domain-containing subunits and a cap ring consisting of CSL4, RRP4 and RRP40.

Its subcellular location is the cytoplasm. It localises to the nucleus. It is found in the nucleolus. Its function is as follows. Non-catalytic component of the RNA exosome complex which has 3'-&gt;5' exoribonuclease activity and participates in a multitude of cellular RNA processing and degradation events. In the nucleus, the RNA exosome complex is involved in proper maturation of stable RNA species such as rRNA, snRNA and snoRNA, in the elimination of RNA processing by-products and non-coding 'pervasive' transcripts, such as antisense RNA species and cryptic unstable transcripts (CUTs), and of mRNAs with processing defects, thereby limiting or excluding their export to the cytoplasm. In the cytoplasm, the RNA exosome complex is involved in general mRNA turnover and in RNA surveillance pathways, preventing translation of aberrant mRNAs. The catalytic inactive RNA exosome core complex of 9 subunits (Exo-9) is proposed to play a pivotal role in the binding and presentation of RNA for ribonucleolysis, and to serve as a scaffold for the association with catalytic subunits and accessory proteins or complexes. SKI6 is part of the hexameric ring of RNase PH domain-containing subunits proposed to form a central channel which threads RNA substrates for degradation. This Saccharomyces cerevisiae (strain ATCC 204508 / S288c) (Baker's yeast) protein is Exosome complex component SKI6 (SKI6).